Reading from the N-terminus, the 151-residue chain is Deoxyuridine 5'-triphosphate nucleotidohydrolase (151 aa).

Substrate is bound by residues 70 to 72 (RSG), asparagine 83, 87 to 89 (LID), and methionine 97.

Belongs to the dUTPase family. Mg(2+) is required as a cofactor.

It catalyses the reaction dUTP + H2O = dUMP + diphosphate + H(+). The protein operates within pyrimidine metabolism; dUMP biosynthesis; dUMP from dCTP (dUTP route): step 2/2. Its function is as follows. This enzyme is involved in nucleotide metabolism: it produces dUMP, the immediate precursor of thymidine nucleotides and it decreases the intracellular concentration of dUTP so that uracil cannot be incorporated into DNA. This Yersinia pseudotuberculosis serotype O:1b (strain IP 31758) protein is Deoxyuridine 5'-triphosphate nucleotidohydrolase.